The sequence spans 845 residues: ATPase morc-1 (845 aa).

Residues N43, 88 to 90 (SAK), and 97 to 103 (RYGNGLK) contribute to the ATP site. N43 lines the Mg(2+) pocket. Residues 284-311 (AAYNKILDEKNETVKKCEEEKALVMSEI) are a coiled coil. K422 lines the ATP pocket. Disordered stretches follow at residues 566 to 590 (LPQK…SASS) and 628 to 739 (KMEP…GKAV). Residues 574-590 (SAPSSSDSQNSIRSASS) show a composition bias toward low complexity. A compositionally biased stretch (basic and acidic residues) spans 637-646 (HDSHIAEVQR).

As to quaternary structure, predominantly forms monomers and dimers, but multimerizes to form trimers and tetramers upon DNA binding. As to expression, expressed in germline and somatic cells.

The protein localises to the nucleus. The protein resides in the nuclear body. The catalysed reaction is ATP + H2O = ADP + phosphate + H(+). Its function is as follows. Binds non-specifically to DNA and forms static foci which grow by recruiting other morc-1 molecules, and thereby stimulates conformational changes and compaction of DNA, which appears to be enhanced by ATP-binding, but does not require ATP activity. Preferentially binds to long DNAs. Compacts and entraps segments of DNA by sequentially forming loops along the DNA, beginning at the free ends of single- and double-tethered DNA. Does not extrude the DNA loops on compacted double-tethered DNA. Involved in gene silencing. Plays a role in germline RNA interference (RNAi), and in particular, the silencing of endogenous small interfering RNA (endo-siRNA) target genes. May play a role in heterochromatin localization and condensation, and the siRNAi-directed trimethylation of 'Lys-9' of histone H3 in hermaphrodite X chromosomes. Promotes transgenerational epigenetic inheritance and germline immortality. This is ATPase morc-1 from Caenorhabditis elegans.